The following is a 39-amino-acid chain: Cytochrome b559 subunit beta (39 aa).

The chain crosses the membrane as a helical span at residues 14 to 30 (WLAIHGLAVPTVFFLGS). His18 is a heme binding site.

This sequence belongs to the PsbE/PsbF family. Heterodimer of an alpha subunit and a beta subunit. PSII is composed of 1 copy each of membrane proteins PsbA, PsbB, PsbC, PsbD, PsbE, PsbF, PsbH, PsbI, PsbJ, PsbK, PsbL, PsbM, PsbT, PsbX, PsbY, PsbZ, Psb30/Ycf12, at least 3 peripheral proteins of the oxygen-evolving complex and a large number of cofactors. It forms dimeric complexes. The cofactor is heme b.

Its subcellular location is the plastid. The protein resides in the chloroplast thylakoid membrane. In terms of biological role, this b-type cytochrome is tightly associated with the reaction center of photosystem II (PSII). PSII is a light-driven water:plastoquinone oxidoreductase that uses light energy to abstract electrons from H(2)O, generating O(2) and a proton gradient subsequently used for ATP formation. It consists of a core antenna complex that captures photons, and an electron transfer chain that converts photonic excitation into a charge separation. This is Cytochrome b559 subunit beta from Staurastrum punctulatum (Green alga).